The following is a 75-amino-acid chain: UPF0352 protein CKO_00587 (75 aa).

Belongs to the UPF0352 family.

The chain is UPF0352 protein CKO_00587 from Citrobacter koseri (strain ATCC BAA-895 / CDC 4225-83 / SGSC4696).